The primary structure comprises 475 residues: Protein arginine N-methyltransferase 2 (475 aa).

Residues 167–194 form a disordered region; sequence EFLSDDDDEEMDVDDDEEDESRDGEETG. Residues 169–194 are compositionally biased toward acidic residues; it reads LSDDDDEEMDVDDDEEDESRDGEETG. The 229-residue stretch at 247 to 475 folds into the RMT2 domain; it reads LAGSQMDYLK…EDFYLPVCTF (229 aa). S-adenosyl-L-methionine contacts are provided by residues Tyr-254, Met-285, 310–315, 331–333, 358–359, and Asp-378; these read FGLGII, EAH, and WQ.

This sequence belongs to the class I-like SAM-binding methyltransferase superfamily. RMT2 methyltransferase family. In terms of assembly, monomer.

It localises to the cytoplasm. It is found in the nucleus. S-adenosyl-L-methionine-dependent protein-arginine N-methyltransferase that methylates the delta-nitrogen atom of arginine residues to form N5-methylarginine (type IV) in target proteins. Monomethylates ribosomal protein L12. The sequence is that of Protein arginine N-methyltransferase 2 from Yarrowia lipolytica (strain CLIB 122 / E 150) (Yeast).